Here is a 117-residue protein sequence, read N- to C-terminus: Ribosome-binding factor A (117 aa).

It belongs to the RbfA family. As to quaternary structure, monomer. Binds 30S ribosomal subunits, but not 50S ribosomal subunits or 70S ribosomes.

Its subcellular location is the cytoplasm. Functionally, one of several proteins that assist in the late maturation steps of the functional core of the 30S ribosomal subunit. Associates with free 30S ribosomal subunits (but not with 30S subunits that are part of 70S ribosomes or polysomes). Required for efficient processing of 16S rRNA. May interact with the 5'-terminal helix region of 16S rRNA. In Nitrosomonas eutropha (strain DSM 101675 / C91 / Nm57), this protein is Ribosome-binding factor A.